The chain runs to 694 residues: Transcription activator of gluconeogenesis Pc22g08580 (694 aa).

The segment at 1 to 61 is disordered; sequence MNMETKNGSP…DPSRPRRKKA (61 aa). Residues 17–55 are compositionally biased toward basic and acidic residues; that stretch reads SGERDSADITEHEQMDVKPKTNGDSKADRKAANAKDPSR. A DNA-binding region (zn(2)-C6 fungal-type) is located at residues 65 to 93; that stretch reads CFACQRAHLTCGDERPCQRCIKRGLQDAC. Disordered regions lie at residues 126-240, 276-300, and 552-582; these read TLRN…GPFF, AAGD…AQFS, and TGGS…GTGR. The segment covering 132-141 has biased composition (polar residues); that stretch reads PISRNGTNAV. Residues 142–171 show a composition bias toward low complexity; the sequence is NSNQQHSQQHPQQPTNPTNNNFYPTPQTQT. Polar residues-rich tracts occupy residues 172–234, 281–300, and 552–581; these read GSYN…SQNP, PTDS…AQFS, and TGGS…SGTG.

This sequence belongs to the ERT1/acuK family.

The protein resides in the nucleus. Transcription factor which regulates nonfermentable carbon utilization. Activator of gluconeogenetic genes. The chain is Transcription activator of gluconeogenesis Pc22g08580 from Penicillium rubens (strain ATCC 28089 / DSM 1075 / NRRL 1951 / Wisconsin 54-1255) (Penicillium chrysogenum).